The primary structure comprises 172 residues: MNRAEKREFVTWLNKIFQESGSVVVAHYSGLTVSQMSDLRSKIGEAGGAVKVAKNTLAKIALQGTKSESMANLFTGQTLIAYSEDPIVAPKVAVDFAKANDKLVILGGSMGAVSLSVDAVKSLASLPSLNELRAKLVGMISTPATRVAQVIKAPAGQVARVIGAYAQKGEAA.

Belongs to the universal ribosomal protein uL10 family. In terms of assembly, part of the ribosomal stalk of the 50S ribosomal subunit. The N-terminus interacts with L11 and the large rRNA to form the base of the stalk. The C-terminus forms an elongated spine to which L12 dimers bind in a sequential fashion forming a multimeric L10(L12)X complex.

Its function is as follows. Forms part of the ribosomal stalk, playing a central role in the interaction of the ribosome with GTP-bound translation factors. This chain is Large ribosomal subunit protein uL10, found in Bartonella bacilliformis (strain ATCC 35685 / KC583 / Herrer 020/F12,63).